Here is a 368-residue protein sequence, read N- to C-terminus: Cystathionine beta-lyase (368 aa).

Residue lysine 221 is modified to N6-(pyridoxal phosphate)lysine.

The protein belongs to the class-II pyridoxal-phosphate-dependent aminotransferase family. MalY/PatB cystathionine beta-lyase subfamily. Requires pyridoxal 5'-phosphate as cofactor.

The enzyme catalyses L,L-cystathionine + H2O = L-homocysteine + pyruvate + NH4(+). It carries out the reaction an S-substituted L-cysteine + H2O = a thiol + pyruvate + NH4(+). It participates in amino-acid biosynthesis; L-methionine biosynthesis via de novo pathway; L-homocysteine from L-cystathionine: step 1/1. Functionally, catalyzes the transformation of cystathionine to homocysteine. This is Cystathionine beta-lyase (metC) from Corynebacterium glutamicum (Brevibacterium saccharolyticum).